We begin with the raw amino-acid sequence, 335 residues long: N-acetyl-gamma-glutamyl-phosphate reductase (335 aa).

Cys156 is an active-site residue.

It belongs to the NAGSA dehydrogenase family. Type 1 subfamily.

Its subcellular location is the cytoplasm. It catalyses the reaction N-acetyl-L-glutamate 5-semialdehyde + phosphate + NADP(+) = N-acetyl-L-glutamyl 5-phosphate + NADPH + H(+). The protein operates within amino-acid biosynthesis; L-arginine biosynthesis; N(2)-acetyl-L-ornithine from L-glutamate: step 3/4. Functionally, catalyzes the NADPH-dependent reduction of N-acetyl-5-glutamyl phosphate to yield N-acetyl-L-glutamate 5-semialdehyde. This Tolumonas auensis (strain DSM 9187 / NBRC 110442 / TA 4) protein is N-acetyl-gamma-glutamyl-phosphate reductase.